Consider the following 468-residue polypeptide: UDP-glucosyl transferase 74CD1 (468 aa).

A UDP-alpha-D-glucose-binding site is contributed by Gly20. The active-site Proton acceptor is His21. Asp114 (charge relay) is an active-site residue. Residues Ser292, Trp344, Gln347, His362, Trp365, Asn366, Ser367, Glu370, Asp386, and Gln387 each coordinate UDP-alpha-D-glucose.

Belongs to the UDP-glycosyltransferase family. In terms of tissue distribution, mainly expressed in flowers, flower buds and young leaves, and, to a lesser extent, in old leaves, stems and roots.

Its pathway is secondary metabolite biosynthesis; terpenoid biosynthesis. Its function is as follows. Component of the oleanane-type triterpene saponins (e.g. saponarioside A and saponarioside B) biosynthetic pathway, leading to the production of natural products with detergent properties used as traditional sources of soap. A glycosyltransferase that, together with SDR1, mediates the conversion of QA-tri to QA-triF; UGT74CD1 may transfer 4-keto-6-deoxy-glucose to QA-tri, which is in turn reduced to D-fucose by SDR1, thus leading to QA-triF formation via the initiation of the C-28 sugar chain. The sequence is that of UDP-glucosyl transferase 74CD1 from Saponaria officinalis (Common soapwort).